Consider the following 745-residue polypeptide: Heterogeneous nuclear ribonucleoprotein U-like protein 2 (745 aa).

One can recognise an SAP domain in the interval 3-37 (VKRLKVTELRSELQRRGLDSRGLKMDLAQRLQEAL). 2 disordered regions span residues 44-239 (DEAG…DEEE) and 625-664 (EEAR…GQRR). Acidic residues predominate over residues 73 to 97 (GDEEEEDDDEEEDEEALLEDEDEEP). A compositionally biased stretch (basic and acidic residues) spans 142–161 (GEEHDNGKGEEDGPEERSGD). Ser-159 is modified (phosphoserine). Phosphothreonine is present on Thr-163. A phosphoserine mark is found at Ser-166, Ser-183, Ser-186, Ser-224, and Ser-226. Residues 183 to 221 (SEKSKPAGSDGERRGVKRQRDEKDEHGRAYYEFREEAYH) show a composition bias toward basic and acidic residues. One can recognise a B30.2/SPRY domain in the interval 224–417 (SKSPPPPEEE…VELNFGQKEE (194 aa)). Acidic residues predominate over residues 230-239 (PEEEAKDEEE). Residues 625–637 (EEARKLLPPSEKR) show a composition bias toward basic and acidic residues. A compositionally biased stretch (basic residues) spans 638–652 (TNRRNNRNKRNRQNR). 4 positions are modified to omega-N-methylarginine: Arg-654, Arg-682, Arg-736, and Arg-745.

As to quaternary structure, binds to MLF1 and retains it in the nucleus.

The protein resides in the nucleus. This Mus musculus (Mouse) protein is Heterogeneous nuclear ribonucleoprotein U-like protein 2 (Hnrnpul2).